Here is a 181-residue protein sequence, read N- to C-terminus: Protein Syd (181 aa).

The protein belongs to the Syd family.

The protein resides in the cell inner membrane. Its function is as follows. Interacts with the SecY protein in vivo. May bind preferentially to an uncomplexed state of SecY, thus functioning either as a chelating agent for excess SecY in the cell or as a regulatory factor that negatively controls the translocase function. The chain is Protein Syd from Escherichia coli O17:K52:H18 (strain UMN026 / ExPEC).